The chain runs to 1462 residues: Trifunctional nucleotide phosphoesterase protein YfkN (1462 aa).

Positions 1–35 (MRIQKRRTHVENILRILLPPIMILSLILPTPPIHA) are cleaved as a signal peptide. The segment at 36 to 623 (EESAAPQVHL…GTNLTFESSL (588 aa)) is 2',3'-cyclic nucleotide 2'-phosphodiesterase/3'-nucleotidase. A divalent metal cation contacts are provided by Asp-52, His-54, Asp-97, Asn-141, His-249, His-282, and His-284. A ribonucleoside 3'-phosphate contacts are provided by residues Tyr-458 and 561–567 (YRASGGG). The tract at residues 624–1427 (LAKPFADKAD…GPAGGLLPDT (804 aa)) is 5'-nucleotidase. A divalent metal cation-binding residues include Asp-676, His-678, Asp-708, Asn-740, His-872, His-895, and His-897. A ribonucleoside 5'-phosphate contacts are provided by residues Phe-1047 and 1127–1133 (FVGAGGD). A disordered region spans residues 1350-1422 (ILNSGSNNKP…GSGTDGPAGG (73 aa)). The span at 1405–1421 (GSGGNGSGGSGTDGPAG) shows a compositional bias: gly residues. The LPXTG sorting signal motif lies at 1424–1428 (LPDTA). Position 1427 is a pentaglycyl murein peptidoglycan amidated threonine (Thr-1427). Residues 1428-1462 (ATSMYSILLAGFLISALGTAMYLHQRRKQNRANQA) constitute a propeptide, removed by sortase.

This sequence belongs to the 5'-nucleotidase family. A divalent metal cation is required as a cofactor.

The protein resides in the secreted. The protein localises to the cell wall. The catalysed reaction is a nucleoside 2',3'-cyclic phosphate + H2O = a nucleoside 3'-phosphate + H(+). The enzyme catalyses a ribonucleoside 3'-phosphate + H2O = a ribonucleoside + phosphate. It carries out the reaction a ribonucleoside 5'-phosphate + H2O = a ribonucleoside + phosphate. Catalyzes the release of inorganic phosphate from 2',3'-cyclic nucleotides through consecutive 2',3'-phosphodiesterase and 3'- (or 2') nucleotidase activities. Also possesses a 5'-nucleotidase activity. Does not catalyze the release of inorganic phosphate from 3',5'-cyclic nucleotides. Probably plays a role in the cellular reprocessing of nucleotides present in the medium, under conditions of phosphate shortage. This is Trifunctional nucleotide phosphoesterase protein YfkN (yfkN) from Bacillus subtilis (strain 168).